A 338-amino-acid polypeptide reads, in one-letter code: Mas-related G-protein coupled receptor member B2 (338 aa).

Over 1–40 (MSGDFLIKNLSTSAWKTNITVLNGSYYIDTSVCVTRNQAM) the chain is Extracellular. Residues Asn9, Asn18, and Asn23 are each glycosylated (N-linked (GlcNAc...) asparagine). Residues 41–61 (ILLSIIISLVGMGLNAIVLWF) traverse the membrane as a helical segment. Residues 62 to 89 (LGIRMHTNAFTVYILNLAMADFLYLCSQ) are Cytoplasmic-facing. A helical transmembrane segment spans residues 90-110 (FVICLLIAFYIFYSIDINIPL). A topological domain (extracellular) is located at residue Val111. A helical membrane pass occupies residues 112–132 (LYVVPIFAYLSGLSILSTISI). Topologically, residues 133–157 (ERCLSVIWPIWYRCKRPRHTSAITC) are cytoplasmic. A helical transmembrane segment spans residues 158–178 (FVLWVMSLLLGLLEGKACGLL). Residues 179-191 (FNSFDSYWCETFD) are Extracellular-facing. The chain crosses the membrane as a helical span at residues 192 to 212 (VITNIWSVVFFGVLCGSSLTL). Residues 213 to 231 (LVRIFCGSQRIPMTRLYVT) are Cytoplasmic-facing. Residues 232-252 (ITLTVLVFLIFGLPFGIYWIL) traverse the membrane as a helical segment. The Extracellular segment spans residues 253–268 (YQWISNFYYVEICNFY). The chain crosses the membrane as a helical span at residues 269–289 (LEILFLSCVNSCMNPIIYFLV). Residues 290 to 338 (GSIRHRRFRRKTLKLLLQRAMQDTPEEEQSGNKSSSEHPEELETVQSCS) are Cytoplasmic-facing. Residues 310 to 338 (MQDTPEEEQSGNKSSSEHPEELETVQSCS) are disordered.

It belongs to the G-protein coupled receptor 1 family. Mas subfamily. In terms of tissue distribution, mast cell-specific.

Its subcellular location is the cell membrane. Mast cell-specific receptor for basic secretagogues, i.e. cationic amphiphilic drugs, as well as endo- or exogenous peptides, consisting of a basic head group and a hydrophobic core. Recognizes and binds small molecules containing a cyclized tetrahydroisoquinoline (THIQ), such as non-steroidal neuromuscular blocking drugs (NMBDs), including tubocurarine and atracurium. In response to these compounds, mediates pseudo-allergic reactions characterized by histamine release, inflammation and airway contraction. In Mus musculus (Mouse), this protein is Mas-related G-protein coupled receptor member B2 (Mrgprb2).